The following is a 148-amino-acid chain: Protoporphyrinogen IX oxidase (148 aa).

4 consecutive transmembrane segments (helical) span residues 7–27 (YFLW…AALF), 58–78 (SFIA…MLLI), 86–106 (GGWL…HFYC), and 128–148 (FNEA…VKPF). His15 lines the heme pocket. Lys92 is a binding site for heme.

The protein belongs to the HemJ family. In terms of assembly, homodimer. Heme b serves as cofactor.

It is found in the cell membrane. The enzyme catalyses protoporphyrinogen IX + 3 A = protoporphyrin IX + 3 AH2. The protein operates within porphyrin-containing compound metabolism; protoporphyrin-IX biosynthesis; protoporphyrin-IX from protoporphyrinogen-IX: step 1/1. Functionally, catalyzes the oxidation of protoporphyrinogen IX to protoporphyrin IX. Is involved in the biosynthesis of tetrapyrrole molecules like heme. Does not use oxygen or artificial electron acceptors such as menadione or benzoquinone. This Helicobacter pylori (strain ATCC 700392 / 26695) (Campylobacter pylori) protein is Protoporphyrinogen IX oxidase.